A 599-amino-acid polypeptide reads, in one-letter code: Elongation factor 4 (599 aa).

Positions 4–186 (EHIRNFSIIA…EIVKKIPPPQ (183 aa)) constitute a tr-type G domain. GTP-binding positions include 16–21 (DHGKST) and 133–136 (NKID).

The protein belongs to the TRAFAC class translation factor GTPase superfamily. Classic translation factor GTPase family. LepA subfamily.

The protein resides in the cell inner membrane. It catalyses the reaction GTP + H2O = GDP + phosphate + H(+). Its function is as follows. Required for accurate and efficient protein synthesis under certain stress conditions. May act as a fidelity factor of the translation reaction, by catalyzing a one-codon backward translocation of tRNAs on improperly translocated ribosomes. Back-translocation proceeds from a post-translocation (POST) complex to a pre-translocation (PRE) complex, thus giving elongation factor G a second chance to translocate the tRNAs correctly. Binds to ribosomes in a GTP-dependent manner. This Geobacter sp. (strain M21) protein is Elongation factor 4.